Reading from the N-terminus, the 383-residue chain is MAKTDYYELLGVSRGASADELKKAYRKLAMQYHPDRNPGDAAAEQKFKDINEAYDVLKDEQKRAAYDRFGHAAFENGGGPGAGGFGGGFGGFGGFEGGIGDIFEQMFGEAMGGRRGGRTERAGADLRAAVEIDLTQAFTGTKTEIRVPTRVSCDACSGTGSADKSAANDTCPTCGGAGRVRAQQGFFVVERTCPTCGGAGRTVRNPCRVCSGAGTVPRERTLSVTIPAGVEDGTRIRLSGEGEAGGRGASPGDLYVHVSIRPHPIFQRDGANVFCRVPLRMAQAALGGEIEVPAIDGTRARVKIPAGTQTGDQFRLRGKGFSVLRSTARGDMYIQVAVETPQNLTKRQRELLEEFEREAGNTASGSPEHEGFFAKVKEFFDGL.

In terms of domain architecture, J spans 5–70; sequence DYYELLGVSR…QKRAAYDRFG (66 aa). The CR-type zinc finger occupies 140–219; it reads GTKTEIRVPT…CSGAGTVPRE (80 aa). Residues C153, C156, C171, C174, C193, C196, C207, and C210 each coordinate Zn(2+). CXXCXGXG motif repeat units follow at residues 153-160, 171-178, 193-200, and 207-214; these read CDACSGTG, CPTCGGAG, and CRVCSGAG.

It belongs to the DnaJ family. Homodimer. Requires Zn(2+) as cofactor.

Its subcellular location is the cytoplasm. Functionally, participates actively in the response to hyperosmotic and heat shock by preventing the aggregation of stress-denatured proteins and by disaggregating proteins, also in an autonomous, DnaK-independent fashion. Unfolded proteins bind initially to DnaJ; upon interaction with the DnaJ-bound protein, DnaK hydrolyzes its bound ATP, resulting in the formation of a stable complex. GrpE releases ADP from DnaK; ATP binding to DnaK triggers the release of the substrate protein, thus completing the reaction cycle. Several rounds of ATP-dependent interactions between DnaJ, DnaK and GrpE are required for fully efficient folding. Also involved, together with DnaK and GrpE, in the DNA replication of plasmids through activation of initiation proteins. In Acidiphilium cryptum (strain JF-5), this protein is Chaperone protein DnaJ.